The chain runs to 588 residues: UvrABC system protein C (588 aa).

The region spanning 12 to 89 (SKPGCYLYLN…IKKYRPKYNV (78 aa)) is the GIY-YIG domain. The region spanning 194–229 (NEVKTLLTNQMHKAAENLQFEEAQRIKEQIISLDFT) is the UVR domain.

The protein belongs to the UvrC family. As to quaternary structure, interacts with UvrB in an incision complex.

It localises to the cytoplasm. Functionally, the UvrABC repair system catalyzes the recognition and processing of DNA lesions. UvrC both incises the 5' and 3' sides of the lesion. The N-terminal half is responsible for the 3' incision and the C-terminal half is responsible for the 5' incision. In Mesoplasma florum (strain ATCC 33453 / NBRC 100688 / NCTC 11704 / L1) (Acholeplasma florum), this protein is UvrABC system protein C.